The sequence spans 387 residues: 1-deoxy-D-xylulose 5-phosphate reductoisomerase (387 aa).

The NADPH site is built by Thr-10, Gly-11, Ser-12, Val-13, Asn-38, and Asn-119. A 1-deoxy-D-xylulose 5-phosphate-binding site is contributed by Lys-120. Position 121 (Glu-121) interacts with NADPH. Asp-145 lines the Mn(2+) pocket. Residues Ser-146, Glu-147, Ser-170, and His-193 each coordinate 1-deoxy-D-xylulose 5-phosphate. Glu-147 is a Mn(2+) binding site. Gly-199 lines the NADPH pocket. 1-deoxy-D-xylulose 5-phosphate-binding residues include Ser-206, Asn-211, Lys-212, and Glu-215. Glu-215 provides a ligand contact to Mn(2+).

Belongs to the DXR family. Mg(2+) is required as a cofactor. It depends on Mn(2+) as a cofactor.

It catalyses the reaction 2-C-methyl-D-erythritol 4-phosphate + NADP(+) = 1-deoxy-D-xylulose 5-phosphate + NADPH + H(+). Its pathway is isoprenoid biosynthesis; isopentenyl diphosphate biosynthesis via DXP pathway; isopentenyl diphosphate from 1-deoxy-D-xylulose 5-phosphate: step 1/6. Catalyzes the NADPH-dependent rearrangement and reduction of 1-deoxy-D-xylulose-5-phosphate (DXP) to 2-C-methyl-D-erythritol 4-phosphate (MEP). This chain is 1-deoxy-D-xylulose 5-phosphate reductoisomerase, found in Wolbachia pipientis wMel.